The following is a 91-amino-acid chain: uncharacterized protein (91 aa).

This is an uncharacterized protein from Vaccinia virus (strain Copenhagen) (VACV).